The sequence spans 889 residues: Alanine--tRNA ligase (889 aa).

His574, His578, Cys676, and His680 together coordinate Zn(2+).

The protein belongs to the class-II aminoacyl-tRNA synthetase family. Zn(2+) is required as a cofactor.

The protein resides in the cytoplasm. The catalysed reaction is tRNA(Ala) + L-alanine + ATP = L-alanyl-tRNA(Ala) + AMP + diphosphate. Its function is as follows. Catalyzes the attachment of alanine to tRNA(Ala) in a two-step reaction: alanine is first activated by ATP to form Ala-AMP and then transferred to the acceptor end of tRNA(Ala). Also edits incorrectly charged Ser-tRNA(Ala) and Gly-tRNA(Ala) via its editing domain. The chain is Alanine--tRNA ligase from Thermobifida fusca (strain YX).